A 206-amino-acid polypeptide reads, in one-letter code: uncharacterized protein (206 aa).

Positions 1–17 (MKGKILFALFLSAGVIA) are cleaved as a signal peptide. Cys18 is lipidated: N-palmitoyl cysteine. The S-diacylglycerol cysteine moiety is linked to residue Cys18. Positions 21 to 58 (ASQAAKQQEVKVAKAETKTKKKESKAEKFRKALAAQDK) form a coiled coil. In terms of domain architecture, Cytochrome c spans 97 to 201 (GDWRKGESLA…DIVAYLHDPE (105 aa)). Heme c contacts are provided by Cys127, Cys130, and His131.

It localises to the cell membrane. This is an uncharacterized protein from Aquifex aeolicus (strain VF5).